The primary structure comprises 433 residues: Trigger factor (433 aa).

The 86-residue stretch at 166 to 251 (GDFAVIDFEG…LHEIQERAKP (86 aa)) folds into the PPIase FKBP-type domain.

This sequence belongs to the FKBP-type PPIase family. Tig subfamily.

It localises to the cytoplasm. It carries out the reaction [protein]-peptidylproline (omega=180) = [protein]-peptidylproline (omega=0). Functionally, involved in protein export. Acts as a chaperone by maintaining the newly synthesized protein in an open conformation. Functions as a peptidyl-prolyl cis-trans isomerase. The polypeptide is Trigger factor (Aliarcobacter butzleri (strain RM4018) (Arcobacter butzleri)).